Reading from the N-terminus, the 173-residue chain is Bifunctional protein PyrR (173 aa).

The short motif at 93–105 (IILVDDVLYTGRT) is the PRPP-binding element.

This sequence belongs to the purine/pyrimidine phosphoribosyltransferase family. PyrR subfamily. As to quaternary structure, homodimer and homohexamer; in equilibrium.

It carries out the reaction UMP + diphosphate = 5-phospho-alpha-D-ribose 1-diphosphate + uracil. Functionally, regulates transcriptional attenuation of the pyrimidine nucleotide (pyr) operon by binding in a uridine-dependent manner to specific sites on pyr mRNA. This disrupts an antiterminator hairpin in the RNA and favors formation of a downstream transcription terminator, leading to a reduced expression of downstream genes. Its function is as follows. Also displays a weak uracil phosphoribosyltransferase activity which is not physiologically significant. The polypeptide is Bifunctional protein PyrR (Streptococcus equi subsp. zooepidemicus (strain MGCS10565)).